The primary structure comprises 202 residues: NAD(P)H-quinone oxidoreductase subunit I (202 aa).

4Fe-4S ferredoxin-type domains are found at residues 55 to 84 and 95 to 124; these read GRIH…VDWV and KNYS…MTEE. Cysteine 64, cysteine 67, cysteine 70, cysteine 74, cysteine 104, cysteine 107, cysteine 110, and cysteine 114 together coordinate [4Fe-4S] cluster. Residues 168–187 are compositionally biased toward basic and acidic residues; sequence EYDPHVVPSDRPRAGQRPEE. Residues 168–202 are disordered; sequence EYDPHVVPSDRPRAGQRPEELVDQYKQAAAANEEN.

This sequence belongs to the complex I 23 kDa subunit family. NDH-1 is composed of at least 11 different subunits. [4Fe-4S] cluster serves as cofactor.

It localises to the cellular thylakoid membrane. The enzyme catalyses a plastoquinone + NADH + (n+1) H(+)(in) = a plastoquinol + NAD(+) + n H(+)(out). The catalysed reaction is a plastoquinone + NADPH + (n+1) H(+)(in) = a plastoquinol + NADP(+) + n H(+)(out). Functionally, NDH-1 shuttles electrons from an unknown electron donor, via FMN and iron-sulfur (Fe-S) centers, to quinones in the respiratory and/or the photosynthetic chain. The immediate electron acceptor for the enzyme in this species is believed to be plastoquinone. Couples the redox reaction to proton translocation, and thus conserves the redox energy in a proton gradient. The polypeptide is NAD(P)H-quinone oxidoreductase subunit I (Synechococcus elongatus (strain ATCC 33912 / PCC 7942 / FACHB-805) (Anacystis nidulans R2)).